A 485-amino-acid chain; its full sequence is E3 ubiquitin-protein ligase TRIM68 (485 aa).

Residues 16–61 (CPICMTFLREPVSISCGHTFCHSCLSGLWKLPGESQNLSYTCPLCR) form an RING-type zinc finger. The B box-type zinc-finger motif lies at 93–134 (LKTDVCDLHKEQLTMFCKEDDMVTCEACKQSPEHEAHSVVPI). Zn(2+) contacts are provided by Cys-98, His-101, Cys-120, and His-126. Positions 144 to 226 (KLQQALEHLR…EQEKGETASK (83 aa)) form a coiled coil. The B30.2/SPRY domain maps to 285–483 (LKTDCRVLGL…TPLTICTLGG (199 aa)).

It belongs to the TRIM/RBCC family. As to quaternary structure, interacts with AR/androgen receptor (via ligand-binding domain). Interacts with KAT5/TIP60. Post-translationally, auto-ubiquitinated.

Its subcellular location is the cytoplasm. The protein localises to the perinuclear region. The protein resides in the nucleus. The catalysed reaction is S-ubiquitinyl-[E2 ubiquitin-conjugating enzyme]-L-cysteine + [acceptor protein]-L-lysine = [E2 ubiquitin-conjugating enzyme]-L-cysteine + N(6)-ubiquitinyl-[acceptor protein]-L-lysine.. It functions in the pathway protein modification; protein ubiquitination. Functions as a ubiquitin E3 ligase. Acts as a coactivator of androgen receptor (AR) depending on its ubiquitin ligase activity. The protein is E3 ubiquitin-protein ligase TRIM68 (Trim68) of Mus musculus (Mouse).